A 49-amino-acid polypeptide reads, in one-letter code: Large ribosomal subunit protein bL33A (49 aa).

The protein belongs to the bacterial ribosomal protein bL33 family.

The protein is Large ribosomal subunit protein bL33A of Geobacillus kaustophilus (strain HTA426).